We begin with the raw amino-acid sequence, 604 residues long: Protein CBFA2T1 (604 aa).

Positions 32-114 (TEKHSTMPDS…SSSSLANQQL (83 aa)) are disordered. S41 bears the Phosphoserine mark. A compositionally biased stretch (polar residues) spans 63 to 86 (QGAPRTSSFTPTTLTNGTSHSPTA). A compositionally biased stretch (low complexity) spans 95 to 114 (NGFSNGPSSSSSSSLANQQL). A TAFH domain is found at 120–215 (ARQLSKLKRF…NPAQYLAQHE (96 aa)). Residues 230-298 (SELLLDVNEN…LPHPTPPPPQ (69 aa)) form a disordered region. The span at 238-264 (ENGKRRTPDRTKENGFDREPLHSEHPS) shows a compositional bias: basic and acidic residues. The span at 271-285 (SPGQRYSPNNGLSYQ) shows a compositional bias: polar residues. Residues 289-298 (LPHPTPPPPQ) show a composition bias toward pro residues. The tract at residues 337 to 383 (QEEMIDHRLTDREWAEEWKHLDHLLNCIMDMVEKTRRSLTVLRRCQE) is important for oligomerization. Residues 337–383 (QEEMIDHRLTDREWAEEWKHLDHLLNCIMDMVEKTRRSLTVLRRCQE) form a nervy homology region 2 (NHR2) region. Positions 401 to 423 (DLKKGGGSSSSHSRQQSPVNPDP) are disordered. Residue S417 is modified to Phosphoserine. The interval 443 to 492 (EEIWKKAEEAVNEVKRQAMTELQKAVSEAERKAHDMITTERAKMERTVAE) is nervy homology region 3 (NHR3). Residues C515, C518, C526, C529, C535, C539, H547, and C551 each contribute to the Zn(2+) site. The MYND-type zinc-finger motif lies at 515 to 551 (CWNCGRKASETCSGCNTARYCGSFCQHKDWEKHHHIC). Positions 557 to 576 (AQQQGDTPAVSSSVTPNSGA) are enriched in polar residues. The tract at residues 557 to 604 (AQQQGDTPAVSSSVTPNSGAGSPMDTPPAATPRSTTPGTPSTIETTPR) is disordered. Over residues 587–604 (TPRSTTPGTPSTIETTPR) the composition is skewed to low complexity.

This sequence belongs to the CBFA2T family. Homooligomer. Homotetramerization is mediated by nervy homology region 2 (NRH2). Can interact with CBFA2T2 and CBFA2T3; heterotetramerization between members of the CBFA2T family is proposed. Interacts with TCF12, SIN3A, HDAC1, HDAC2, HDAC3, NCOR1, NCOR2. Interacts with ATN1 (via its N-terminus); the interaction enhances the transcriptional repression. Interacts (via its N-terminus) with ZBTB16; the interaction increases the transcription repression activity of ZBTB16. AML1-MTG8/ETO fusion protein interacts with CBFB. AML1-MTG8/ETO is part of a stable transcription factor complex AETFC in leukemic cells; AETFC formation seems to be involved in recruitment of EP300. AML1-MTG8/ETO nervy homology region 2-mediated oligomerization is proposed to be homotypic, required for AML1-MTG8/ETO-mediated transformation of primary hematopoietic cells and is required for AML1-MTG8/ETO interaction with TCF12. Most abundantly expressed in brain. Lower levels in lung, heart, testis and ovary.

The protein resides in the nucleus. In terms of biological role, transcriptional corepressor which facilitates transcriptional repression via its association with DNA-binding transcription factors and recruitment of other corepressors and histone-modifying enzymes. Can repress the expression of MMP7 in a ZBTB33-dependent manner. Can repress transactivation mediated by TCF12. Acts as a negative regulator of adipogenesis. The AML1-MTG8/ETO fusion protein frequently found in leukemic cells is involved in leukemogenesis and contributes to hematopoietic stem/progenitor cell self-renewal. The sequence is that of Protein CBFA2T1 (RUNX1T1) from Homo sapiens (Human).